A 114-amino-acid polypeptide reads, in one-letter code: TYRO protein tyrosine kinase-binding protein (114 aa).

The signal sequence occupies residues 1-21 (MGALEPSWCLLFLPVLLTVGG). Residues 22–42 (LSPVQAQSDTFPRCDCSSVSP) are Extracellular-facing. The helical transmembrane segment at 43 to 63 (GVLAGIVLGDLVLTLLIALAV) threads the bilayer. Ca(2+) is bound at residue Asp52. Residues 64–114 (YSLGRLVSRGQGTAEGTRKQHIAETESPYQELQGQRPEVYSDLNTQRQYYR) are Cytoplasmic-facing. Residues 74 to 107 (QGTAEGTRKQHIAETESPYQELQGQRPEVYSDLN) are disordered. One can recognise an ITAM domain in the interval 81-109 (RKQHIAETESPYQELQGQRPEVYSDLNTQ). 2 positions are modified to phosphotyrosine: Tyr92 and Tyr103.

The protein belongs to the TYROBP family. As to quaternary structure, homodimer; disulfide-linked. Homotrimer; disulfide-linked. Homotetramer; disulfide-linked. Homotrimers and homotetramers form when low levels of partner receptors are available and are competitive with assembly with interacting receptors. They may represent alternative oligomerization states or may be intermediates in the receptor assembly process. Binding of a metal cation aids in homooligomerization through coordination of the metal ion by the subunits of the oligomer. Interacts with TREM1. Interacts with TREM2. Interacts with TREM3. Interacts with CLECSF5. Interacts with CD300LB and CD300C2. Interacts with CD300E. Interacts (via ITAM domain) with SYK (via SH2 domains); activates SYK mediating neutrophil and macrophage integrin-mediated activation. Interacts (via transmembrane domain) with KLRK1 isoform 2 (via transmembrane domain); the interaction is required for KLRK1 NK cell surface expression and NK cell-mediated cytotoxicity. Interacts with KLRC2. Interacts with CD300H. Interacts with KLRD1. Interacts with KLRA4 and KLRA8. Tyrosine phosphorylated. Following ligand binding by associated receptors, tyrosine phosphorylated in the ITAM domain which leads to activation of additional tyrosine kinases and subsequent cell activation. In terms of tissue distribution, expressed on microglia (at protein level). Expressed on oligodendrocytes (at protein level). Expressed on macrophages and osteoclasts. Expressed on dendritic cells in liver, spleen, kidney and lung with highest levels in liver dendritic cells.

The protein localises to the cell membrane. In terms of biological role, adapter protein which non-covalently associates with activating receptors found on the surface of a variety of immune cells to mediate signaling and cell activation following ligand binding by the receptors. TYROBP is tyrosine-phosphorylated in the ITAM domain following ligand binding by the associated receptors which leads to activation of additional tyrosine kinases and subsequent cell activation. Also has an inhibitory role in some cells. Non-covalently associates with activating receptors of the CD300 family to mediate cell activation. Also mediates cell activation through association with activating receptors of the CD200R family. Required for neutrophil activation mediated by integrin. Required for the activation of myeloid cells mediated by the CLEC5A/MDL1 receptor. Associates with natural killer (NK) cell receptors such as the KLRD1/KLRC2 heterodimer to mediate NK cell activation. Also associates non-covalently with the NK cell receptors KLRA4/LY49D and KLRA8/LY49H which leads to NK cell activation. Associates with TREM1 to mediate activation of neutrophils and monocytes. Associates with TREM2 on monocyte-derived dendritic cells to mediate up-regulation of chemokine receptor CCR7 and dendritic cell maturation and survival. Association with TREM2 mediates cytokine-induced formation of multinucleated giant cells which are formed by the fusion of macrophages. Stabilizes the TREM2 C-terminal fragment (TREM2-CTF) which is produced by TREM2 ectodomain shedding. In microglia, required with TREM2 for phagocytosis of apoptotic neurons. Required with ITGAM/CD11B in microglia to control production of microglial superoxide ions which promote the neuronal apoptosis that occurs during brain development. Promotes pro-inflammatory responses in microglia following nerve injury which accelerates degeneration of injured neurons. Positively regulates the expression of the IRAK3/IRAK-M kinase and IL10 production by liver dendritic cells and inhibits their T cell allostimulatory ability. Negatively regulates B cell proliferation. Required for CSF1-mediated osteoclast cytoskeletal organization. Positively regulates multinucleation during osteoclast development. The polypeptide is TYRO protein tyrosine kinase-binding protein (Mus musculus (Mouse)).